A 355-amino-acid polypeptide reads, in one-letter code: Trans-3-hydroxy-L-proline dehydratase (355 aa).

The active-site Proton acceptor is the Cys-111. Substrate contacts are provided by residues 112 to 113 (GH) and 276 to 277 (GS).

The protein belongs to the proline racemase family. As to quaternary structure, homodimer.

The enzyme catalyses trans-3-hydroxy-L-proline = 1-pyrroline-2-carboxylate + H2O. Catalyzes the dehydration of trans-3-hydroxy-L-proline (t3LHyp) to Delta(1)-pyrroline-2-carboxylate (Pyr2C). Together with LhpI, is involved in a metabolic pathway that converts t3LHyp to L-proline. The sequence is that of Trans-3-hydroxy-L-proline dehydratase from Colwellia psychrerythraea (strain 34H / ATCC BAA-681) (Vibrio psychroerythus).